The chain runs to 241 residues: Ribonuclease PH (241 aa).

Phosphate contacts are provided by residues R89 and 127–129 (GTR).

Belongs to the RNase PH family. Homohexameric ring arranged as a trimer of dimers.

The enzyme catalyses tRNA(n+1) + phosphate = tRNA(n) + a ribonucleoside 5'-diphosphate. Its function is as follows. Phosphorolytic 3'-5' exoribonuclease that plays an important role in tRNA 3'-end maturation. Removes nucleotide residues following the 3'-CCA terminus of tRNAs; can also add nucleotides to the ends of RNA molecules by using nucleoside diphosphates as substrates, but this may not be physiologically important. Probably plays a role in initiation of 16S rRNA degradation (leading to ribosome degradation) during starvation. The polypeptide is Ribonuclease PH (Xylella fastidiosa (strain M23)).